The primary structure comprises 286 residues: Probable tRNA(His) guanylyltransferase (286 aa).

Residues D29, G30, and D76 each coordinate Mg(2+). Residues 29 to 34 and 75 to 76 contribute to the GTP site; these read DGKKFH and SD.

The protein belongs to the tRNA(His) guanylyltransferase family. Mg(2+) serves as cofactor.

It catalyses the reaction a 5'-end ribonucleotide-tRNA(His) + GTP + ATP + H2O = a 5'-end phospho-guanosine-ribonucleotide-tRNA(His) + AMP + 2 diphosphate + H(+). Functionally, adds a GMP to the 5'-end of tRNA(His) after transcription and RNase P cleavage. In Drosophila melanogaster (Fruit fly), this protein is Probable tRNA(His) guanylyltransferase.